The primary structure comprises 185 residues: Elongation factor P (185 aa).

The protein belongs to the elongation factor P family.

It is found in the cytoplasm. It functions in the pathway protein biosynthesis; polypeptide chain elongation. Involved in peptide bond synthesis. Stimulates efficient translation and peptide-bond synthesis on native or reconstituted 70S ribosomes in vitro. Probably functions indirectly by altering the affinity of the ribosome for aminoacyl-tRNA, thus increasing their reactivity as acceptors for peptidyl transferase. This Halalkalibacterium halodurans (strain ATCC BAA-125 / DSM 18197 / FERM 7344 / JCM 9153 / C-125) (Bacillus halodurans) protein is Elongation factor P.